The following is a 156-amino-acid chain: MSRRHSAEKREINPDPKFGDLVVTKFMNAIMLHGKKSVAESIVYGAFDVVQGKTKQEPLGVFHSALDNVAPHVEVRSRRVGGATYQVPVDVRPERRQALAIRWLITAARKRNETTMVDRLSGELMDAANNRGSAVKKREDTHKMADANRAFSHYRW.

It belongs to the universal ribosomal protein uS7 family. In terms of assembly, part of the 30S ribosomal subunit. Contacts proteins S9 and S11.

Functionally, one of the primary rRNA binding proteins, it binds directly to 16S rRNA where it nucleates assembly of the head domain of the 30S subunit. Is located at the subunit interface close to the decoding center, probably blocks exit of the E-site tRNA. This is Small ribosomal subunit protein uS7 from Agrobacterium fabrum (strain C58 / ATCC 33970) (Agrobacterium tumefaciens (strain C58)).